Reading from the N-terminus, the 436-residue chain is GTPase Der (436 aa).

EngA-type G domains lie at 4-167 (PVVA…PKEE) and 176-351 (VKFS…DNHS). GTP is bound by residues 10-17 (GRPNVGKS), 57-61 (DTGGI), 119-122 (NKVD), 182-189 (GRPNVGKS), 229-233 (DTAGM), and 294-297 (NKWD). A KH-like domain is found at 352-436 (LRVQSSMLND…PIRVIARKRK (85 aa)).

The protein belongs to the TRAFAC class TrmE-Era-EngA-EngB-Septin-like GTPase superfamily. EngA (Der) GTPase family. Associates with the 50S ribosomal subunit.

Functionally, GTPase that plays an essential role in the late steps of ribosome biogenesis. This is GTPase Der from Listeria monocytogenes serotype 4b (strain F2365).